Consider the following 502-residue polypeptide: Glycerol kinase (502 aa).

Residue Thr14 participates in ADP binding. Residues Thr14, Thr15, and Ser16 each contribute to the ATP site. Thr14 provides a ligand contact to sn-glycerol 3-phosphate. ADP is bound at residue Arg18. Positions 84, 85, and 136 each coordinate sn-glycerol 3-phosphate. Residues Arg84, Glu85, and Tyr136 each contribute to the glycerol site. At His232 the chain carries Phosphohistidine; by HPr. Residue Asp246 coordinates sn-glycerol 3-phosphate. Glycerol-binding residues include Asp246 and Gln247. Thr268 and Gly311 together coordinate ADP. 4 residues coordinate ATP: Thr268, Gly311, Gln315, and Gly412. ADP-binding residues include Gly412 and Asn416.

This sequence belongs to the FGGY kinase family. As to quaternary structure, homotetramer and homodimer (in equilibrium). The phosphoenolpyruvate-dependent sugar phosphotransferase system (PTS), including enzyme I, and histidine-containing protein (HPr) are required for the phosphorylation, which leads to the activation of the enzyme.

It catalyses the reaction glycerol + ATP = sn-glycerol 3-phosphate + ADP + H(+). The protein operates within polyol metabolism; glycerol degradation via glycerol kinase pathway; sn-glycerol 3-phosphate from glycerol: step 1/1. Its activity is regulated as follows. Activated by phosphorylation and inhibited by fructose 1,6-bisphosphate (FBP). Key enzyme in the regulation of glycerol uptake and metabolism. Catalyzes the phosphorylation of glycerol to yield sn-glycerol 3-phosphate. In Streptococcus pneumoniae (strain 70585), this protein is Glycerol kinase.